Consider the following 399-residue polypeptide: Probable sugar efflux transporter (399 aa).

The next 12 helical transmembrane spans lie at 15-35, 50-70, 81-101, 103-123, 136-156, 168-188, 209-229, 246-266, 273-293, 301-321, 333-353, and 364-384; these read VVTL…PVGL, VGMM…PFML, LIGL…AWNF, VLVI…SITS, AQAL…GIPI, MTFL…VKLL, PALV…YTAY, FATV…ILFG, ASGL…LLLP, LMLL…GMQV, VAMS…ALVG, and SVGY…LMIF.

It belongs to the major facilitator superfamily. SotB (TC 2.A.1.2) family.

Its subcellular location is the cell inner membrane. Functionally, involved in the efflux of sugars. The physiological role may be the reduction of the intracellular concentration of toxic sugars or sugar metabolites. This Klebsiella pneumoniae subsp. pneumoniae (strain ATCC 700721 / MGH 78578) protein is Probable sugar efflux transporter.